A 476-amino-acid chain; its full sequence is MSDRSDPTHAIWQKVLAALTADDRITPQLHGFISLVEPKGVMTGTLYLEVPNDLTRGMLEQRIRVPLLNAIGSLDEAAGVSNFAIVVNPGIAQDAFAQHPEPAEQPYIETPTITAPTDNPGLPASPSRGDSRLNPKYGFDTFVIGGSNRFAHAAAVAVAEAPAKAYNPLFIYGDSGLGKTHLLHAIGHYAISLYPGIRVRYVSSEEFTNDFINSIANNRSSLFQSRYRDNDILLIDDIQFLQGKDSTQEAFFHTFNTLHDHNKQVVITSDLPPKHLTGFEDRMRSRFEWGLITDVQAPDLETRIAILRKKAQSEKLQVPDDILEYMATKVTSNIRELEGTLIRVTAFASLNKTPVDLALVQTVLKDLITLDEDNVIAPVDIINHTAAYFKLTVDDLYGSSRSQAVATARQIAMYLCRELTNLSLPKIGQLFGNRDHTTVMYANKKITELMKERRSIYNQVTELTSRIKQNHRYGKM.

The domain I, interacts with DnaA modulators stretch occupies residues 1-87; that stretch reads MSDRSDPTHA…AGVSNFAIVV (87 aa). The domain II stretch occupies residues 87 to 131; that stretch reads VNPGIAQDAFAQHPEPAEQPYIETPTITAPTDNPGLPASPSRGDS. Residues 132–348 are domain III, AAA+ region; the sequence is RLNPKYGFDT…GTLIRVTAFA (217 aa). Positions 176, 178, 179, and 180 each coordinate ATP. Positions 349–476 are domain IV, binds dsDNA; the sequence is SLNKTPVDLA…IKQNHRYGKM (128 aa).

This sequence belongs to the DnaA family. Oligomerizes as a right-handed, spiral filament on DNA at oriC.

Its subcellular location is the cytoplasm. Functionally, plays an essential role in the initiation and regulation of chromosomal replication. ATP-DnaA binds to the origin of replication (oriC) to initiate formation of the DNA replication initiation complex once per cell cycle. Binds the DnaA box (a 9 base pair repeat at the origin) and separates the double-stranded (ds)DNA. Forms a right-handed helical filament on oriC DNA; dsDNA binds to the exterior of the filament while single-stranded (ss)DNA is stabiized in the filament's interior. The ATP-DnaA-oriC complex binds and stabilizes one strand of the AT-rich DNA unwinding element (DUE), permitting loading of DNA polymerase. After initiation quickly degrades to an ADP-DnaA complex that is not apt for DNA replication. Binds acidic phospholipids. The sequence is that of Chromosomal replication initiator protein DnaA from Clavibacter sepedonicus (Clavibacter michiganensis subsp. sepedonicus).